An 882-amino-acid chain; its full sequence is MPEIAQPTPMMRQYLETKARYPDALLFFRLGDFYELFFEDALTASEALQITLTARAKGDDKVPMCGVPHHAARGYVARLLEKGFKVAICDQVEEPGKSAIVKREVTRVVTPGMVFDDQVLDPREASYLGVVALAEGRAGLALLDASTGQLQCGEVPDDARAVDELRRAGVRELVLPLGADAARAERIERAVGVPAARRPAADYERADDRLRRHLGVASLDGFGVGGEPLGLAAAAAALAYLADTQRATPRHVDRVSRLRTEDVLLLDEATRTNLELERTLNGGRKKGSLLALLDRSVTAPGGRRLAEWLRYPLTELAPIHARLDAVEELAGASVAREDLAAALRPVADAERLLSRLVLGQGNARDLRALAGALLALPALAELLGGRAAALLRDAGEGTRGLEELAAHLDRAVAEEPPATLREGGIIRRGFSPELDEIVAVAEDGKGFIARLEAREKERTGIGSLKVRFNKVFGYYLEVTKANLHAVPSDYERRQTTVGGERFVTPELKRFEETVLTAEERRIAVEGRLFEELRQRVAEAAPRIRTAADAVATADALLALARVAAERGYCRPEVDGSEVLEIVDGRHPVVEAVLPEGPAGFVPNDVLVASRGALECERLGALHVITGPNMAGKSTVMRQAALVTLLAQMGAFVPARKARVGIVDRIFTRVGASDDLARGRSTFMVEMTETAAILHNATRRSLVVLDEIGRGTSTFDGVSIAWAVAEHLHDQVGCRTLFATHYHELQDLARERPAVRNLTVAVREVGDRVVFLRKLVQGGASRSYGIEVAKLAGLPAEVLARAREILKNLEALEVDEGGHAALARGRKTRRADPQSQLGLFAPAPAPADPALEEIASALRATEIDALRPLDALNLLAAWRAKLR.

Residue 626-633 (GPNMAGKS) coordinates ATP.

Belongs to the DNA mismatch repair MutS family.

This protein is involved in the repair of mismatches in DNA. It is possible that it carries out the mismatch recognition step. This protein has a weak ATPase activity. The chain is DNA mismatch repair protein MutS from Anaeromyxobacter sp. (strain Fw109-5).